A 366-amino-acid chain; its full sequence is A-type ATP synthase subunit C (366 aa).

This sequence belongs to the V-ATPase V0D/AC39 subunit family. In terms of assembly, has multiple subunits with at least A(3), B(3), C, D, E, F, H, I and proteolipid K(x).

It localises to the cell membrane. Its function is as follows. Component of the A-type ATP synthase that produces ATP from ADP in the presence of a proton gradient across the membrane. The polypeptide is A-type ATP synthase subunit C (Thermococcus onnurineus (strain NA1)).